Consider the following 321-residue polypeptide: AA9 family lytic polysaccharide monooxygenase D (321 aa).

The N-terminal stretch at 1 to 21 is a signal peptide; the sequence is MRSTIVATFAAGLVVASLVAA. Cu(2+) is bound at residue H22. Disulfide bonds link C75-C192 and C116-C120. N-linked (GlcNAc...) asparagine glycosylation occurs at N78. H105 is a Cu(2+) binding site. Residue N152 is glycosylated (N-linked (GlcNAc...) asparagine). The O2 site is built by H178 and Q187. Y189 is a Cu(2+) binding site. Residue N266 is glycosylated (N-linked (GlcNAc...) asparagine).

The protein belongs to the polysaccharide monooxygenase AA9 family. The cofactor is Cu(2+).

It localises to the secreted. The enzyme catalyses [(1-&gt;4)-beta-D-glucosyl]n+m + reduced acceptor + O2 = 4-dehydro-beta-D-glucosyl-[(1-&gt;4)-beta-D-glucosyl]n-1 + [(1-&gt;4)-beta-D-glucosyl]m + acceptor + H2O.. In terms of biological role, lytic polysaccharide monooxygenase (LPMO) that depolymerizes crystalline and amorphous polysaccharides via the oxidation of scissile alpha- or beta-(1-4)-glycosidic bonds, yielding C1 or C4 oxidation products. Catalysis by LPMOs requires the reduction of the active-site copper from Cu(II) to Cu(I) by a reducing agent and H(2)O(2) or O(2) as a cosubstrate. This is AA9 family lytic polysaccharide monooxygenase D from Geotrichum candidum (Oospora lactis).